A 110-amino-acid polypeptide reads, in one-letter code: uncharacterized protein (110 aa).

The tract at residues 38-62 (SVQQNARAEEAEAAAPPAEEDSLPD) is disordered.

This is an uncharacterized protein from Mus musculus (Mouse).